The following is a 118-amino-acid chain: Small ribosomal subunit protein uS13 (118 aa).

Residues 91–118 (HRHSLPVRGQRTKTNARTRKGPRKPIRK) form a disordered region.

The protein belongs to the universal ribosomal protein uS13 family. In terms of assembly, part of the 30S ribosomal subunit. Forms a loose heterodimer with protein S19. Forms two bridges to the 50S subunit in the 70S ribosome.

Located at the top of the head of the 30S subunit, it contacts several helices of the 16S rRNA. In the 70S ribosome it contacts the 23S rRNA (bridge B1a) and protein L5 of the 50S subunit (bridge B1b), connecting the 2 subunits; these bridges are implicated in subunit movement. Contacts the tRNAs in the A and P-sites. The polypeptide is Small ribosomal subunit protein uS13 (Hahella chejuensis (strain KCTC 2396)).